Consider the following 251-residue polypeptide: Phosphate import ATP-binding protein PstB 2 (251 aa).

The ABC transporter domain occupies 5-246; it reads LTTENLSLFY…PVKQETNDYI (242 aa). 37-44 lines the ATP pocket; it reads GPSGCGKS.

Belongs to the ABC transporter superfamily. Phosphate importer (TC 3.A.1.7) family. As to quaternary structure, the complex is composed of two ATP-binding proteins (PstB), two transmembrane proteins (PstC and PstA) and a solute-binding protein (PstS).

It localises to the cell membrane. The catalysed reaction is phosphate(out) + ATP + H2O = ADP + 2 phosphate(in) + H(+). Part of the ABC transporter complex PstSACB involved in phosphate import. Responsible for energy coupling to the transport system. The sequence is that of Phosphate import ATP-binding protein PstB 2 from Lactiplantibacillus plantarum (strain ATCC BAA-793 / NCIMB 8826 / WCFS1) (Lactobacillus plantarum).